The following is a 365-amino-acid chain: Ribosomal RNA large subunit methyltransferase M (365 aa).

S-adenosyl-L-methionine is bound by residues S193, 226–229, D245, D265, and D282; that span reads CPGG. K311 functions as the Proton acceptor in the catalytic mechanism.

The protein belongs to the class I-like SAM-binding methyltransferase superfamily. RNA methyltransferase RlmE family. RlmM subfamily. In terms of assembly, monomer.

It is found in the cytoplasm. It carries out the reaction cytidine(2498) in 23S rRNA + S-adenosyl-L-methionine = 2'-O-methylcytidine(2498) in 23S rRNA + S-adenosyl-L-homocysteine + H(+). Functionally, catalyzes the 2'-O-methylation at nucleotide C2498 in 23S rRNA. The chain is Ribosomal RNA large subunit methyltransferase M from Alteromonas mediterranea (strain DSM 17117 / CIP 110805 / LMG 28347 / Deep ecotype).